We begin with the raw amino-acid sequence, 60 residues long: Small integral membrane protein 3 (60 aa).

The helical transmembrane segment at 20-40 threads the bilayer; sequence IWAIVLIILATVVIMTSLFLC.

It localises to the membrane. The sequence is that of Small integral membrane protein 3 (Smim3) from Rattus norvegicus (Rat).